Reading from the N-terminus, the 154-residue chain is Superoxide dismutase [Cu-Zn] (154 aa).

Residues His-47, His-49, and His-64 each contribute to the Cu cation site. A disulfide bridge connects residues Cys-58 and Cys-147. Zn(2+) contacts are provided by His-64, His-72, His-81, and Asp-84. His-121 contributes to the Cu cation binding site. The interval 122–143 (GGTDDLGKGGNEESLKTGNAGP) is disordered. The segment covering 123-136 (GTDDLGKGGNEESL) has biased composition (basic and acidic residues). Arg-144 is a binding site for substrate.

The protein belongs to the Cu-Zn superoxide dismutase family. As to quaternary structure, homodimer. The cofactor is Cu cation. Requires Zn(2+) as cofactor.

The protein localises to the cytoplasm. It carries out the reaction 2 superoxide + 2 H(+) = H2O2 + O2. Destroys radicals which are normally produced within the cells and which are toxic to biological systems. The chain is Superoxide dismutase [Cu-Zn] (SOD1) from Cordyceps militaris (Caterpillar fungus).